We begin with the raw amino-acid sequence, 233 residues long: Large ribosomal subunit protein uL1 (233 aa).

This sequence belongs to the universal ribosomal protein uL1 family. In terms of assembly, part of the 50S ribosomal subunit.

Its function is as follows. Binds directly to 23S rRNA. The L1 stalk is quite mobile in the ribosome, and is involved in E site tRNA release. In terms of biological role, protein L1 is also a translational repressor protein, it controls the translation of the L11 operon by binding to its mRNA. This chain is Large ribosomal subunit protein uL1, found in Aeromonas hydrophila subsp. hydrophila (strain ATCC 7966 / DSM 30187 / BCRC 13018 / CCUG 14551 / JCM 1027 / KCTC 2358 / NCIMB 9240 / NCTC 8049).